The chain runs to 333 residues: Cap-specific mRNA (nucleoside-2'-O-)-methyltransferase (333 aa).

Tyr-22 lines the mRNA pocket. Gln-39, Tyr-66, Gly-68, Gly-72, Asp-95, Arg-97, Val-116, and Asp-138 together coordinate S-adenosyl-L-methionine. The interval 169–249 (PVASSLKWRC…NKIVRNKVVV (81 aa)) is binding to NPH-I. A binding to Rap94 region spans residues 169-333 (PVASSLKWRC…NSKRSVRSNK (165 aa)). Residue Lys-175 is the For methyltransferase activity of the active site. MRNA-binding positions include 177–180 (RCPF), Asp-182, 205–207 (SAE), and Glu-233. Residues 305–333 (SHEPIQRKISSKNSMSKNRNSKRSVRSNK) form a disordered region. Positions 311-322 (RKISSKNSMSKN) are enriched in low complexity. Over residues 323–333 (RNSKRSVRSNK) the composition is skewed to basic residues.

It belongs to the class I-like SAM-binding methyltransferase superfamily. Poxvirus/kinetoplastid 2'-O-MTase family. In terms of assembly, interacts with poly(A) polymerase catalytic subunit OPG063. Interacts with OPG109 and OPG123; these interactions might help linking transcription to capping and polyadenylation.

The protein resides in the virion. It carries out the reaction a 5'-end (N(7)-methyl 5'-triphosphoguanosine)-ribonucleoside in mRNA + S-adenosyl-L-methionine = a 5'-end (N(7)-methyl 5'-triphosphoguanosine)-(2'-O-methyl-ribonucleoside) in mRNA + S-adenosyl-L-homocysteine + H(+). In terms of biological role, displays methyltransferase, positive regulation of the poly(A) polymerase and transcription elongation activities. Involved in the modification of both mRNA ends and in intermediate and late gene positive transcription elongation. At the mRNAs 5' end, methylates the ribose 2' OH group of the first transcribed nucleotide, thereby producing a 2'-O-methylpurine cap. At the 3' end, functions as a processivity factor which stimulates the activity of the viral poly(A) polymerase OPG063 that creates mRNA's poly(A) tail. In the presence of OPG102, OPG063 does not dissociate from the RNA allowing tail elongation to around 250 adenylates. The polypeptide is Cap-specific mRNA (nucleoside-2'-O-)-methyltransferase (OPG102) (Vaccinia virus (strain Western Reserve) (VACV)).